Consider the following 942-residue polypeptide: Protein ZDS2 (942 aa).

Residues 1–28 (MVLMEDMQNKDGHNTVENSSGGTDSNNN) form a disordered region. Residues 15 to 28 (TVENSSGGTDSNNN) are compositionally biased toward polar residues. At Ser-50 the chain carries Phosphoserine. 5 disordered regions span residues 91–142 (SRNS…DDSI), 483–541 (SQES…NSSN), 617–654 (VVSS…KNSL), 682–728 (VKKE…DIDT), and 788–817 (SRDT…ISTL). The segment covering 99–122 (SSKESLQESLHEENIIRSEQKEEQ) has biased composition (basic and acidic residues). The segment covering 123 to 134 (GSEDNDAYEEGD) has biased composition (acidic residues). Low complexity-rich tracts occupy residues 483 to 497 (SQES…SNNS), 518 to 541 (SSSE…NSSN), and 617 to 627 (VVSSSESQPSK). A compositionally biased stretch (basic residues) spans 682-704 (VKKELKKKASHSSLSKFRKSPKK). The span at 807–816 (TSPTAPQIST) shows a compositional bias: polar residues.

It to yeast ZDS1/NRC1/CES1. In terms of assembly, interacts with SKG6.

Functionally, acts as a negative regulator of polarized growth via an alternative mechanism to ZDS1. In heat-stressed cells appears to play a role in localizing BCY1 to the cytoplasm. Seems to interact with, and down-regulate, CDC42. Also acts as a suppressor of PKC1. May act as an integration point for distinct signaling pathways helping to maintain a balance among these different pathways. The protein is Protein ZDS2 (ZDS2) of Saccharomyces cerevisiae (strain ATCC 204508 / S288c) (Baker's yeast).